Consider the following 981-residue polypeptide: DNA ligase 4 (981 aa).

Positions 320, 322, 327, 380, 424, 484, 489, 506, and 508 each coordinate ATP. Residue lysine 322 is the N6-AMP-lysine intermediate of the active site. Glutamate 380 contributes to the Mg(2+) binding site. Glutamate 484 provides a ligand contact to Mg(2+). The disordered stretch occupies residues 544-563; the sequence is SEKNNPSSYESGSDSDSDSE. 2 BRCT domains span residues 721-819 and 875-980; these read SKAD…PKYV and ERLL…EYAA.

This sequence belongs to the ATP-dependent DNA ligase family. The cofactor is Mg(2+).

It localises to the nucleus. The enzyme catalyses ATP + (deoxyribonucleotide)n-3'-hydroxyl + 5'-phospho-(deoxyribonucleotide)m = (deoxyribonucleotide)n+m + AMP + diphosphate.. Its function is as follows. DNA ligase involved in DNA non-homologous end joining (NHEJ); required for double-strand break (DSB) repair. This Eremothecium gossypii (strain ATCC 10895 / CBS 109.51 / FGSC 9923 / NRRL Y-1056) (Yeast) protein is DNA ligase 4 (LIG4).